We begin with the raw amino-acid sequence, 80 residues long: Pancreatic polypeptide (80 aa).

A signal peptide spans 1 to 25; that stretch reads MPPRWASLLLLACSLLLLAVPPGTA. Tyr-61 carries the tyrosine amide modification. Residues 65–80 constitute a propeptide that is removed on maturation; the sequence is SSSRVLCEEPMGAAGC.

It belongs to the NPY family.

It localises to the secreted. Its function is as follows. Hormone secreted by pancreatic cells that acts as a regulator of pancreatic and gastrointestinal functions. The polypeptide is Pancreatic polypeptide (PPY) (Gallus gallus (Chicken)).